Consider the following 449-residue polypeptide: Phosphoglucosamine mutase (449 aa).

The Phosphoserine intermediate role is filled by Ser104. Mg(2+)-binding residues include Ser104, Asp243, Asp245, and Asp247. Ser104 is modified (phosphoserine).

The protein belongs to the phosphohexose mutase family. It depends on Mg(2+) as a cofactor. Post-translationally, activated by phosphorylation.

The enzyme catalyses alpha-D-glucosamine 1-phosphate = D-glucosamine 6-phosphate. Its function is as follows. Catalyzes the conversion of glucosamine-6-phosphate to glucosamine-1-phosphate. The protein is Phosphoglucosamine mutase of Xanthomonas oryzae pv. oryzae (strain PXO99A).